Consider the following 294-residue polypeptide: Shikimate dehydrogenase (NADP(+)) (294 aa).

Shikimate contacts are provided by residues 14 to 16 (SKS) and Thr-61. The Proton acceptor role is filled by Lys-65. An NADP(+)-binding site is contributed by Asp-77. Shikimate contacts are provided by Asn-86 and Asp-102. Residues 140–144 (GSGGA) and Leu-235 each bind NADP(+). Tyr-237 serves as a coordination point for shikimate. An NADP(+)-binding site is contributed by Gly-259.

It belongs to the shikimate dehydrogenase family. As to quaternary structure, homodimer.

It carries out the reaction shikimate + NADP(+) = 3-dehydroshikimate + NADPH + H(+). Its pathway is metabolic intermediate biosynthesis; chorismate biosynthesis; chorismate from D-erythrose 4-phosphate and phosphoenolpyruvate: step 4/7. Its function is as follows. Involved in the biosynthesis of the chorismate, which leads to the biosynthesis of aromatic amino acids. Catalyzes the reversible NADPH linked reduction of 3-dehydroshikimate (DHSA) to yield shikimate (SA). In Blochmanniella floridana, this protein is Shikimate dehydrogenase (NADP(+)).